The following is a 1018-amino-acid chain: Inner centromere protein pic1 (1018 aa).

At Ser-171 the chain carries Phosphoserine. Disordered stretches follow at residues 184–207, 247–287, 306–365, 522–556, 570–756, 781–813, 848–867, and 877–944; these read VPLR…PKQK, RTKD…SSSP, AKES…PPEI, TRKS…LPPS, EPLH…TSKP, EPDS…EDRK, TKQN…SQSN, and HAPA…LPSW. Polar residues-rich tracts occupy residues 189–199 and 268–287; these read TSPSPSETADS and PSTT…SSSP. Residues 309 to 320 are compositionally biased toward low complexity; that stretch reads SLTSSTRLSTSY. 2 stretches are compositionally biased toward polar residues: residues 329-339 and 522-554; these read VAFSSETVTSS and TRKS…SSLP. 2 stretches are compositionally biased toward basic and acidic residues: residues 570–580 and 624–644; these read EPLHDDSRQNS and RSSE…RELS. Residues 645 to 664 show a composition bias toward polar residues; sequence NNEFPSRQTKTVTSANSSNI. Composition is skewed to basic and acidic residues over residues 665 to 679 and 692 to 702; these read RDME…RSEP and KPFEEKSEKPT. Composition is skewed to polar residues over residues 705-719 and 784-808; these read RLVT…SWHS and SVTS…TNSQ. A compositionally biased stretch (low complexity) spans 890–902; it reads PSSKSPLLKTPKS.

Belongs to the INCENP family. In terms of assembly, component of the CPC complex at least composed of ark1, bir1 and pic1.

The protein localises to the nucleus. Its subcellular location is the cytoplasm. It is found in the cytoskeleton. The protein resides in the spindle. In terms of biological role, component of the chromosomal passenger complex (CPC), a complex that acts as a key regulator of mitosis. Has a role in sister chromatid cohesion and condensation. This chain is Inner centromere protein pic1 (pic1), found in Schizosaccharomyces pombe (strain 972 / ATCC 24843) (Fission yeast).